The primary structure comprises 120 residues: uncharacterized protein (120 aa).

One can recognise an HIT domain in the interval 7–120; sequence VFAKIITKNL…KLIGLINNND (114 aa). The Histidine triad motif signature appears at 101-105; it reads HFHFH.

This is an uncharacterized protein from Rickettsia prowazekii (strain Madrid E).